A 418-amino-acid chain; its full sequence is Protein-lysine N-trimethyltransferase SMYD5 (418 aa).

An SET domain is found at 21–352 (VSVEVRFVSS…PGEEICISYL (332 aa)). The segment at 98–136 (PELCTVRKDLHQNCPHCQVMYCSAECRLAATEQYHQVLC) adopts an MYND-type zinc-finger fold. S-adenosyl-L-methionine is bound at residue Y351. The interval 385-418 (ADEPNVTSEEEEEEEEEEEGEPEDAELGDEMTDV) is disordered.

It belongs to the class V-like SAM-binding methyltransferase superfamily. Interacts with the N-CoR complex. Interacts with EHMT2 and CBX5. Ubiquitinated and degradaed by the proteasome in response to mild hypothermia (32 degrees Celsius), relieving repression of the SP1 gene.

The protein localises to the cytoplasm. The enzyme catalyses L-lysyl-[protein] + 3 S-adenosyl-L-methionine = N(6),N(6),N(6)-trimethyl-L-lysyl-[protein] + 3 S-adenosyl-L-homocysteine + 3 H(+). It catalyses the reaction L-lysyl(20)-[histone H4] + 3 S-adenosyl-L-methionine = N(6),N(6),N(6)-trimethyl-L-lysyl(20)-[histone H4] + 3 S-adenosyl-L-homocysteine + 3 H(+). It carries out the reaction L-lysyl(36)-[histone H3] + 3 S-adenosyl-L-methionine = N(6),N(6),N(6)-trimethyl-L-lysyl(36)-[histone H3] + 3 S-adenosyl-L-homocysteine + 3 H(+). Functionally, protein-lysine N-trimethyltransferase that specifically catalyzes trimethylation of 'Lys-22' of the RPL40/eL40 subunit of the 60S ribosome, thereby promoting translation elongation and protein synthesis. May also act as a histone methyltransferase in the context of histone octamers, but not on nucleosome substrates: trimethylates 'Lys-36' of histone H3 and 'Lys-20' of histone H4 to form H3K36me3 and H4K20me3, respectively. The histone methyltransferase activity, which is independent of its SET domain, is however unsure in vivo. In association with the NCoR corepressor complex, involved in the repression of toll-like receptor 4 (TLR4)-target inflammatory genes in macrophages, possibly by catalyzing the formation of H4K20me3 at the gene promoters. Plays an important role in embryonic stem (ES) cell self-renewal and differentiation. Maintains genome stability of ES cells during differentiation through regulation of heterochromatin formation and repression of endogenous repetitive DNA elements by promoting H4K20me3 marks. Acts as a regulator of the hypothermia response: its degradation in response to mild hypothermia relieves the formation of H3K36me3 at gene promoters, allowing expression of the neuroprotective gene SP1. This is Protein-lysine N-trimethyltransferase SMYD5 from Homo sapiens (Human).